A 406-amino-acid chain; its full sequence is Putative nickel insertion protein (406 aa).

This sequence belongs to the LarC family.

In Thermomicrobium roseum (strain ATCC 27502 / DSM 5159 / P-2), this protein is Putative nickel insertion protein.